The following is a 315-amino-acid chain: tRNA dimethylallyltransferase (315 aa).

14 to 21 (GPTASGKT) serves as a coordination point for ATP. 16–21 (TASGKT) is a substrate binding site. 3 interaction with substrate tRNA regions span residues 39–42 (DSAL), 163–167 (QRIQR), and 248–253 (RCVGYR).

The protein belongs to the IPP transferase family. In terms of assembly, monomer. It depends on Mg(2+) as a cofactor.

It carries out the reaction adenosine(37) in tRNA + dimethylallyl diphosphate = N(6)-dimethylallyladenosine(37) in tRNA + diphosphate. Its function is as follows. Catalyzes the transfer of a dimethylallyl group onto the adenine at position 37 in tRNAs that read codons beginning with uridine, leading to the formation of N6-(dimethylallyl)adenosine (i(6)A). The polypeptide is tRNA dimethylallyltransferase (Paraburkholderia xenovorans (strain LB400)).